Here is a 635-residue protein sequence, read N- to C-terminus: Threonine--tRNA ligase (635 aa).

A TGS domain is found at 1–62 (MITITLPDGS…EHDAILRIIT (62 aa)). A catalytic region spans residues 244–535 (DHRKIGKAQD…LIEHYAGIWP (292 aa)). Zn(2+) contacts are provided by Cys-335, His-386, and His-512.

The protein belongs to the class-II aminoacyl-tRNA synthetase family. Homodimer. Zn(2+) serves as cofactor.

Its subcellular location is the cytoplasm. It catalyses the reaction tRNA(Thr) + L-threonine + ATP = L-threonyl-tRNA(Thr) + AMP + diphosphate + H(+). In terms of biological role, catalyzes the attachment of threonine to tRNA(Thr) in a two-step reaction: L-threonine is first activated by ATP to form Thr-AMP and then transferred to the acceptor end of tRNA(Thr). Also edits incorrectly charged L-seryl-tRNA(Thr). In Xylella fastidiosa (strain M23), this protein is Threonine--tRNA ligase.